The following is a 713-amino-acid chain: Transcription activator of gluconeogenesis CPC735_053490 (713 aa).

The tract at residues 1 to 70 is disordered; that stretch reads MTANAINGPV…NAKDPLRPRR (70 aa). Residues 19–56 show a composition bias toward polar residues; the sequence is GDNNKSADTTMADQGTRPESQPQGQNNGAKPQNGQTKP. Residues 77 to 105 constitute a DNA-binding region (zn(2)-C6 fungal-type); that stretch reads CFACQRAHLTCGDERPCQRCIKRGIQNAC. Polar residues predominate over residues 145-159; it reads PLTRNGSNSKTNFYP. 4 disordered regions span residues 145-229, 274-318, 541-564, and 623-665; these read PLTR…ASGQ, GAGE…LFGD, GGSSGAMSGVTSRGSFTPRTGMDI, and GTTS…QRKW. Residues 160 to 171 are compositionally biased toward low complexity; that stretch reads QQQSSFNNFYQN. Positions 191-212 are enriched in polar residues; it reads FPSQSPVSPTFNMTANPAASGN. Over residues 213–229 the composition is skewed to low complexity; it reads QGLPSSLSASNSNASGQ. Polar residues-rich tracts occupy residues 295–312, 541–558, and 649–659; these read SGTYTAGSNFGESPTGQP, GGSSGAMSGVTSRGSFTP, and GASNGQSQHSL.

The protein belongs to the ERT1/acuK family.

It localises to the nucleus. Transcription factor which regulates nonfermentable carbon utilization. Activator of gluconeogenetic genes. The chain is Transcription activator of gluconeogenesis CPC735_053490 from Coccidioides posadasii (strain C735) (Valley fever fungus).